A 160-amino-acid chain; its full sequence is Lymphocyte antigen 96 (160 aa).

An N-terminal signal peptide occupies residues methionine 1 to threonine 16. Cystine bridges form between cysteine 25-cysteine 51, cysteine 37-cysteine 148, and cysteine 95-cysteine 105. Asparagine 26 carries an N-linked (GlcNAc...) asparagine glycan. Asparagine 114 carries an N-linked (GlcNAc...) asparagine glycan. Positions phenylalanine 119–glycine 123 are interaction with lipopolysaccharide. Asparagine 150 is a glycosylation site (N-linked (GlcNAc...) asparagine).

Heterogeneous homomer formed from homodimers; disulfide-linked. Belongs to the lipopolysaccharide (LPS) receptor, a multi-protein complex containing at least CD14, LY96 and TLR4. Binds to the extracellular domains of TLR2 and TLR4. Ligand binding induces interaction with TLR4 and oligomerization of the complex. N-glycosylated.

It localises to the secreted. The protein resides in the extracellular space. Binds bacterial lipopolysaccharide (LPS). Cooperates with TLR4 in the innate immune response to bacterial lipopolysaccharide (LPS), and with TLR2 in the response to cell wall components from Gram-positive and Gram-negative bacteria. Enhances TLR4-dependent activation of NF-kappa-B. Cells expressing both LY96 and TLR4, but not TLR4 alone, respond to LPS. The chain is Lymphocyte antigen 96 (LY96) from Bos taurus (Bovine).